A 67-amino-acid chain; its full sequence is ATP synthase F(0) complex subunit 8 (67 aa).

Residues 8–24 (TWFITIISSMITLFILF) form a helical membrane-spanning segment. The residue at position 54 (K54) is an N6-acetyllysine; alternate. At K54 the chain carries N6-succinyllysine; alternate. K57 bears the N6-acetyllysine mark.

It belongs to the ATPase protein 8 family. In terms of assembly, component of the ATP synthase complex composed at least of ATP5F1A/subunit alpha, ATP5F1B/subunit beta, ATP5MC1/subunit c (homooctomer), MT-ATP6/subunit a, MT-ATP8/subunit 8, ATP5ME/subunit e, ATP5MF/subunit f, ATP5MG/subunit g, ATP5MK/subunit k, ATP5MJ/subunit j, ATP5F1C/subunit gamma, ATP5F1D/subunit delta, ATP5F1E/subunit epsilon, ATP5PF/subunit F6, ATP5PB/subunit b, ATP5PD/subunit d, ATP5PO/subunit OSCP. ATP synthase complex consists of a soluble F(1) head domain (subunits alpha(3) and beta(3)) - the catalytic core - and a membrane F(0) domain - the membrane proton channel (subunits c, a, 8, e, f, g, k and j). These two domains are linked by a central stalk (subunits gamma, delta, and epsilon) rotating inside the F1 region and a stationary peripheral stalk (subunits F6, b, d, and OSCP). Interacts with PRICKLE3.

It localises to the mitochondrion membrane. Its function is as follows. Subunit 8, of the mitochondrial membrane ATP synthase complex (F(1)F(0) ATP synthase or Complex V) that produces ATP from ADP in the presence of a proton gradient across the membrane which is generated by electron transport complexes of the respiratory chain. ATP synthase complex consist of a soluble F(1) head domain - the catalytic core - and a membrane F(1) domain - the membrane proton channel. These two domains are linked by a central stalk rotating inside the F(1) region and a stationary peripheral stalk. During catalysis, ATP synthesis in the catalytic domain of F(1) is coupled via a rotary mechanism of the central stalk subunits to proton translocation. In vivo, can only synthesize ATP although its ATP hydrolase activity can be activated artificially in vitro. Part of the complex F(0) domain. This is ATP synthase F(0) complex subunit 8 from Mus musculus (Mouse).